A 186-amino-acid polypeptide reads, in one-letter code: Large ribosomal subunit protein uL10 (186 aa).

Belongs to the universal ribosomal protein uL10 family. In terms of assembly, part of the ribosomal stalk of the 50S ribosomal subunit. The N-terminus interacts with L11 and the large rRNA to form the base of the stalk. The C-terminus forms an elongated spine to which L12 dimers bind in a sequential fashion forming a multimeric L10(L12)X complex.

Functionally, forms part of the ribosomal stalk, playing a central role in the interaction of the ribosome with GTP-bound translation factors. The sequence is that of Large ribosomal subunit protein uL10 from Nitrosococcus oceani (strain ATCC 19707 / BCRC 17464 / JCM 30415 / NCIMB 11848 / C-107).